We begin with the raw amino-acid sequence, 98 residues long: Large ribosomal subunit protein uL23 (98 aa).

The protein belongs to the universal ribosomal protein uL23 family. Part of the 50S ribosomal subunit. Contacts protein L29, and trigger factor when it is bound to the ribosome.

Functionally, one of the early assembly proteins it binds 23S rRNA. One of the proteins that surrounds the polypeptide exit tunnel on the outside of the ribosome. Forms the main docking site for trigger factor binding to the ribosome. The chain is Large ribosomal subunit protein uL23 from Herpetosiphon aurantiacus (strain ATCC 23779 / DSM 785 / 114-95).